A 260-amino-acid chain; its full sequence is uncharacterized protein (260 aa).

Belongs to the methyltransferase superfamily.

The protein localises to the cytoplasm. It is found in the nucleus. Functionally, probable methyltransferase. This is an uncharacterized protein from Schizosaccharomyces pombe (strain 972 / ATCC 24843) (Fission yeast).